Consider the following 880-residue polypeptide: Alanine--tRNA ligase (880 aa).

Zn(2+)-binding residues include histidine 566, histidine 570, cysteine 668, and histidine 672.

This sequence belongs to the class-II aminoacyl-tRNA synthetase family. The cofactor is Zn(2+).

The protein resides in the cytoplasm. It carries out the reaction tRNA(Ala) + L-alanine + ATP = L-alanyl-tRNA(Ala) + AMP + diphosphate. Its function is as follows. Catalyzes the attachment of alanine to tRNA(Ala) in a two-step reaction: alanine is first activated by ATP to form Ala-AMP and then transferred to the acceptor end of tRNA(Ala). Also edits incorrectly charged Ser-tRNA(Ala) and Gly-tRNA(Ala) via its editing domain. The polypeptide is Alanine--tRNA ligase (Acetivibrio thermocellus (strain ATCC 27405 / DSM 1237 / JCM 9322 / NBRC 103400 / NCIMB 10682 / NRRL B-4536 / VPI 7372) (Clostridium thermocellum)).